We begin with the raw amino-acid sequence, 162 residues long: Interleukin-15 (162 aa).

A signal peptide spans 1–29 (MRISKPYLRSTSIQCYLCLLLNSHFLAEA). The propeptide occupies 30–48 (GIHVFIFGCISAGLPKTEA). Disulfide bonds link Cys-83/Cys-133 and Cys-90/Cys-136. N-linked (GlcNAc...) asparagine glycosylation is found at Asn-108, Asn-119, Asn-127, and Asn-143.

Belongs to the IL-15/IL-21 family. Expressed in many tissues including heart, spleen, lung, liver, muscle and kidney (at mRNA level). Expressed in many tissues including heart, spleen, lung, liver, muscle and kidney (at protein level).

The protein resides in the secreted. Its function is as follows. Cytokine that plays a major role in the development of inflammatory and protective immune responses to microbial invaders and parasites by modulating immune cells of both the innate and adaptive immune systems. Stimulates the proliferation of natural killer cells, T-cells and B-cells and promotes the secretion of several cytokines. In monocytes, induces the production of IL8 and monocyte chemotactic protein 1/CCL2, two chemokines that attract neutrophils and monocytes respectively to sites of infection. Unlike most cytokines, which are secreted in soluble form, IL15 is expressed in association with its high affinity IL15RA on the surface of IL15-producing cells and delivers signals to target cells that express IL2RB and IL2RG receptor subunits. Binding to its receptor triggers the phosphorylation of JAK1 and JAK3 and the recruitment and subsequent phosphorylation of signal transducer and activator of transcription-3/STAT3 and STAT5. In mast cells, induces the rapid tyrosine phosphorylation of STAT6 and thereby controls mast cell survival and release of cytokines such as IL4. This is Interleukin-15 (IL15) from Oryctolagus cuniculus (Rabbit).